The following is a 143-amino-acid chain: uncharacterized protein (143 aa).

Residues 1–32 (MITNLRRRTAMAAAGLGAALGLGILLVPTVDA) form the signal peptide.

To M.tuberculosis Rv1269c.

This is an uncharacterized protein from Mycobacterium tuberculosis (strain CDC 1551 / Oshkosh).